We begin with the raw amino-acid sequence, 185 residues long: Signal peptidase complex subunit 3 (185 aa).

Residues 1–16 (MHTSIQRIQQTFSQAS) are Cytoplasmic-facing. Residues 17–37 (TVLSIIAAIVFVVSYIQLVVA) traverse the membrane as a helical; Signal-anchor for type II membrane protein segment. At 38–185 (NVWSLPEANF…KGSIKFPQLV (148 aa)) the chain is on the lumenal side. An N-linked (GlcNAc...) asparagine glycan is attached at Asn151.

It belongs to the SPCS3 family. In terms of assembly, component of the signal peptidase complex (SPC) composed of a catalytic subunit SEC11 and three accessory subunits SPC1, SPC2 and SPC3. The complex induces a local thinning of the ER membrane which is used to measure the length of the signal peptide (SP) h-region of protein substrates. This ensures the selectivity of the complex towards h-regions shorter than 18-20 amino acids. SPC associates with the translocon complex.

It is found in the endoplasmic reticulum membrane. Functionally, essential component of the signal peptidase complex (SPC) which catalyzes the cleavage of N-terminal signal sequences from nascent proteins as they are translocated into the lumen of the endoplasmic reticulum. Essential for the SPC catalytic activity, possibly by stabilizing and positioning the active center of the complex close to the lumenal surface. Essential for viability. The protein is Signal peptidase complex subunit 3 (SPC3) of Yarrowia lipolytica (strain CLIB 122 / E 150) (Yeast).